The following is a 24-amino-acid chain: Cytochrome c3-2 (24 aa).

A disordered region spans residues glycine 1–proline 24.

Binds 4 heme groups per subunit.

The protein resides in the periplasm. Participates in sulfate respiration coupled with phosphorylation by transferring electrons from the enzyme dehydrogenase to ferredoxin. The protein is Cytochrome c3-2 of Nitratidesulfovibrio vulgaris (Desulfovibrio vulgaris).